The primary structure comprises 62 residues: Large ribosomal subunit protein uL29 (62 aa).

It belongs to the universal ribosomal protein uL29 family.

This Ruthia magnifica subsp. Calyptogena magnifica protein is Large ribosomal subunit protein uL29.